The sequence spans 151 residues: 3-hydroxyacyl-thioester dehydratase Z (151 aa).

Positions 11-131 constitute a MaoC-like domain; the sequence is AAAAGEKVGQ…TVQATVSTTV (121 aa). Residues 60–63, 86–89, 97–99, Gln124, and Arg148 each bind substrate; these read IAHG, AINY, and PAP.

This sequence belongs to the enoyl-CoA hydratase/isomerase family. As to quaternary structure, homodimer.

It carries out the reaction a (3R)-3-hydroxyacyl-CoA = a (2E)-enoyl-CoA + H2O. Its function is as follows. Shows trans-enoyl-CoA hydratase/3-hydroxyacyl-CoA dehydratase activity. The protein is 3-hydroxyacyl-thioester dehydratase Z of Mycobacterium bovis (strain ATCC BAA-935 / AF2122/97).